Consider the following 129-residue polypeptide: Putative membrane protein insertion efficiency factor (129 aa).

The protein belongs to the UPF0161 family.

The protein resides in the cell inner membrane. Its function is as follows. Could be involved in insertion of integral membrane proteins into the membrane. The polypeptide is Putative membrane protein insertion efficiency factor (Rhodopseudomonas palustris (strain TIE-1)).